A 262-amino-acid polypeptide reads, in one-letter code: Catechol O-methyltransferase domain-containing protein 1 (262 aa).

A helical; Signal-anchor for type II membrane protein membrane pass occupies residues 12 to 32 (AALALGSAALGAAFATGLLLG). S-adenosyl-L-methionine contacts are provided by residues D108, 110–111 (GT), S116, E134, V135, A163, D185, D187, and Y194.

This sequence belongs to the class I-like SAM-binding methyltransferase superfamily. Cation-dependent O-methyltransferase family. As to quaternary structure, homodimer.

It is found in the membrane. Functionally, putative O-methyltransferase. This Mus musculus (Mouse) protein is Catechol O-methyltransferase domain-containing protein 1 (Comtd1).